The chain runs to 427 residues: MFFTCGSNEAMVVSGFCRSPPVMVAGGRVFVLPCIQQIQRISLNTLTLNVKSEKVYTRHGVPISVTGIAQVKIQGQNKEMLAAACQMFLGKTEAEIAHIALETLEGHQRAIMAHMTVEEIYKDRQKFSEQVFKVASSDLVNMGISVVSYTLKDIHDDQDYLHSLGKARTAQVQKDARIGEAEAKRDAGIREAKAKQEKVSAQYLSEIEMAKAQRDYELKKAAYDIEVNTRRAQADLAYQLQVAKTKQQIEEQRVQVQVVERAQQVAVQEQEIARREKELEARVRKPAEAERYKLERLAEAEKSQLIMQAEAEAESVRMRGEAEAFAIGARARAEAEQMAKKAEAFQLYQEAAQLDMLLEKLPQVAEEISGPLTSANKITLASSGSGTMGAAKVTGEVLDILTRLPESVERLTGVSISQVNHKPLRTA.

Residues serine 19, serine 163, and serine 385 each carry the phosphoserine modification. Threonine 387 is modified (phosphothreonine).

The protein belongs to the band 7/mec-2 family. Flotillin subfamily. Heterooligomeric complex of flotillin-1 and flotillin-2 and caveolin-1 and caveolin-2. Interacts with ECPAS.

The protein resides in the cell membrane. Its subcellular location is the endosome. It is found in the membrane. The protein localises to the caveola. It localises to the melanosome. The protein resides in the membrane raft. In terms of biological role, may act as a scaffolding protein within caveolar membranes, functionally participating in formation of caveolae or caveolae-like vesicles. The protein is Flotillin-1 (FLOT1) of Pongo abelii (Sumatran orangutan).